The primary structure comprises 356 residues: NADH-quinone oxidoreductase subunit H (356 aa).

A run of 8 helical transmembrane segments spans residues 4–24, 79–99, 127–147, 166–186, 198–218, 251–271, 289–309, and 329–349; these read ALILAWGIKILSLFFVILTGV, LLAPTISMTCAIMAWAVIPFG, GVLYMLAISSLSVYGIMIAGW, ISYELPMGLSIVAIVIMTGSL, MWNILSPPGFVAFFIYVTAMF, FFLAEYMNMITMSCLTTLLFF, FIGLGFFILKVLFFAFLFIWV, and MIPWGLFVVMFASIYTVYWKE.

This sequence belongs to the complex I subunit 1 family. In terms of assembly, NDH-1 is composed of 14 different subunits. Subunits NuoA, H, J, K, L, M, N constitute the membrane sector of the complex.

The protein resides in the cell inner membrane. The catalysed reaction is a quinone + NADH + 5 H(+)(in) = a quinol + NAD(+) + 4 H(+)(out). In terms of biological role, NDH-1 shuttles electrons from NADH, via FMN and iron-sulfur (Fe-S) centers, to quinones in the respiratory chain. The immediate electron acceptor for the enzyme in this species is believed to be ubiquinone. Couples the redox reaction to proton translocation (for every two electrons transferred, four hydrogen ions are translocated across the cytoplasmic membrane), and thus conserves the redox energy in a proton gradient. This subunit may bind ubiquinone. The protein is NADH-quinone oxidoreductase subunit H of Leptospira biflexa serovar Patoc (strain Patoc 1 / ATCC 23582 / Paris).